A 254-amino-acid polypeptide reads, in one-letter code: Ribosomal RNA small subunit methyltransferase G (254 aa).

Residues glycine 92, 143 to 144, and arginine 156 contribute to the S-adenosyl-L-methionine site; that span reads AE.

The protein belongs to the methyltransferase superfamily. RNA methyltransferase RsmG family.

The protein localises to the cytoplasm. Its function is as follows. Specifically methylates the N7 position of a guanine in 16S rRNA. This Leptospira interrogans serogroup Icterohaemorrhagiae serovar copenhageni (strain Fiocruz L1-130) protein is Ribosomal RNA small subunit methyltransferase G.